A 117-amino-acid polypeptide reads, in one-letter code: Large ribosomal subunit protein bL20 (117 aa).

The protein belongs to the bacterial ribosomal protein bL20 family.

Its function is as follows. Binds directly to 23S ribosomal RNA and is necessary for the in vitro assembly process of the 50S ribosomal subunit. It is not involved in the protein synthesizing functions of that subunit. The sequence is that of Large ribosomal subunit protein bL20 from Limosilactobacillus reuteri (strain DSM 20016) (Lactobacillus reuteri).